A 311-amino-acid polypeptide reads, in one-letter code: Methionyl-tRNA formyltransferase (311 aa).

Residue 110–113 (SLLP) coordinates (6S)-5,6,7,8-tetrahydrofolate.

It belongs to the Fmt family.

The enzyme catalyses L-methionyl-tRNA(fMet) + (6R)-10-formyltetrahydrofolate = N-formyl-L-methionyl-tRNA(fMet) + (6S)-5,6,7,8-tetrahydrofolate + H(+). Attaches a formyl group to the free amino group of methionyl-tRNA(fMet). The formyl group appears to play a dual role in the initiator identity of N-formylmethionyl-tRNA by promoting its recognition by IF2 and preventing the misappropriation of this tRNA by the elongation apparatus. The polypeptide is Methionyl-tRNA formyltransferase (Streptococcus gordonii (strain Challis / ATCC 35105 / BCRC 15272 / CH1 / DL1 / V288)).